Reading from the N-terminus, the 228-residue chain is uncharacterized protein (228 aa).

A run of 6 helical transmembrane segments spans residues 14-34 (GWYI…MWLI), 53-73 (FLII…VLIV), 108-128 (GLTF…FFWL), 148-168 (AVKM…PIFF), 178-198 (TIIS…GFSI), and 200-220 (SVVY…YMAI).

The protein resides in the cell membrane. This is an uncharacterized protein from Bacillus subtilis (strain 168).